A 156-amino-acid polypeptide reads, in one-letter code: Type II secretion system core protein G (156 aa).

A propeptide spans 1–22 (leader sequence); sequence MQQSQRGCGQNSYGQSGYRQRG. Position 23 is an N-methylphenylalanine (Phe23). A helical transmembrane segment spans residues 23-43; that stretch reads FTLLEIMVVIVILGVLASLVV.

This sequence belongs to the GSP G family. In terms of assembly, type II secretion system is composed of four main components: the outer membrane complex, the inner membrane complex, the cytoplasmic secretion ATPase and the periplasm-spanning pseudopilus. Forms homomultimers. Cleaved by the prepilin peptidase. Post-translationally, methylated by prepilin peptidase at the amino group of the N-terminal phenylalanine once the leader sequence is cleaved.

It localises to the cell inner membrane. In terms of biological role, core component of the type II secretion system required for the energy-dependent secretion of extracellular factors such as proteases and toxins from the periplasm. Pseudopilin (pilin-like) protein that polymerizes to form the pseudopilus. Further polymerization triggers pseudopilus growth. In Pectobacterium carotovorum subsp. carotovorum (Erwinia carotovora subsp. carotovora), this protein is Type II secretion system core protein G (outG).